The chain runs to 183 residues: Ribose 1,5-bisphosphate phosphokinase PhnN (183 aa).

ATP is bound at residue 6 to 13; sequence GPSGAGKD.

This sequence belongs to the ribose 1,5-bisphosphokinase family.

It carries out the reaction alpha-D-ribose 1,5-bisphosphate + ATP = 5-phospho-alpha-D-ribose 1-diphosphate + ADP. Its pathway is metabolic intermediate biosynthesis; 5-phospho-alpha-D-ribose 1-diphosphate biosynthesis; 5-phospho-alpha-D-ribose 1-diphosphate from D-ribose 5-phosphate (route II): step 3/3. Catalyzes the phosphorylation of ribose 1,5-bisphosphate to 5-phospho-D-ribosyl alpha-1-diphosphate (PRPP). This is Ribose 1,5-bisphosphate phosphokinase PhnN from Agrobacterium fabrum (strain C58 / ATCC 33970) (Agrobacterium tumefaciens (strain C58)).